Consider the following 314-residue polypeptide: Lysophospholipase D GDPD1 (314 aa).

The Extracellular segment spans residues 1–3 (MSS). The chain crosses the membrane as a helical span at residues 4 to 24 (TAAFCLLSTLGGYLVTSFLLL). The Cytoplasmic segment spans residues 25 to 195 (KYPALLHQRK…VDKCYKENSD (171 aa)). Positions 40 to 309 (SRHISHRGGA…DYPTKLKDFL (270 aa)) constitute a GP-PDE domain. 3 residues coordinate a divalent metal cation: glutamate 72, aspartate 74, and histidine 87. The helical transmembrane segment at 196–216 (IPILFSLQRVLLILGLFFTGL) threads the bilayer. Topologically, residues 217–314 (LPFVPIREQF…LKDFLNNFSA (98 aa)) are extracellular.

This sequence belongs to the glycerophosphoryl diester phosphodiesterase family. As to expression, widely expressed.

It is found in the cytoplasm. It localises to the membrane. Its subcellular location is the perinuclear region. The protein resides in the endoplasmic reticulum. It catalyses the reaction 1-hexadecanoyl-sn-glycero-3-phosphocholine + H2O = 1-hexadecanoyl-sn-glycero-3-phosphate + choline + H(+). The enzyme catalyses 1-hexadecanoyl-sn-glycero-3-phosphoethanolamine + H2O = 1-hexadecanoyl-sn-glycero-3-phosphate + ethanolamine + H(+). The catalysed reaction is N-hexadecanoyl-sn-glycero-3-phosphoethanolamine + H2O = N-hexadecanoylethanolamine + sn-glycerol 3-phosphate + H(+). It carries out the reaction N-(5Z,8Z,11Z,14Z-eicosatetraenoyl)-1-(9Z-octadecenoyl)-sn-glycero-3-phosphoethanolamine + H2O = N-(5Z,8Z,11Z,14Z-eicosatetraenoyl)-ethanolamine + 1-(9Z-octadecenoyl)-sn-glycero-3-phosphate + H(+). It catalyses the reaction N,1-di-(9Z-octadecenoyl)-sn-glycero-3-phosphoethanolamine + H2O = N-(9Z-octadecenoyl) ethanolamine + 1-(9Z-octadecenoyl)-sn-glycero-3-phosphate + H(+). The enzyme catalyses N-hexadecanoyl-1-(9Z-octadecenoyl)-sn-glycero-3-phosphoethanolamine + H2O = N-hexadecanoylethanolamine + 1-(9Z-octadecenoyl)-sn-glycero-3-phosphate + H(+). The catalysed reaction is a 1-O-alkyl-sn-glycero-3-phosphocholine + H2O = a 1-O-alkyl-sn-glycero-3-phosphate + choline + H(+). It carries out the reaction 1-O-hexadecyl-sn-glycero-3-phosphocholine + H2O = 1-O-hexadecyl-sn-glycero-3-phosphate + choline + H(+). It catalyses the reaction 1-(9Z-octadecenoyl)-sn-glycero-3-phosphocholine + H2O = 1-(9Z-octadecenoyl)-sn-glycero-3-phosphate + choline + H(+). The enzyme catalyses N,1-dihexadecanoyl-sn-glycero-3-phosphoethanolamine + H2O = N-hexadecanoylethanolamine + 1-hexadecanoyl-sn-glycero-3-phosphate + H(+). The catalysed reaction is 1-O-(1Z-octadecenyl)-sn-glycero-3-phospho-(N-5Z,8Z,11Z,14Z-eicosatetraenoyl)-ethanolamine + H2O = 1-O-(1Z-octadecenyl)-sn-glycero-3-phosphate + N-(5Z,8Z,11Z,14Z-eicosatetraenoyl)-ethanolamine + H(+). It carries out the reaction 1-O-(1Z-octadecenyl)-sn-glycero-3-phospho-(N-9Z-octadecenoyl)-ethanolamine + H2O = 1-O-(1Z-octadecenyl)-sn-glycero-3-phosphate + N-(9Z-octadecenoyl) ethanolamine + H(+). It catalyses the reaction 1-O-(1Z-octadecenyl)-sn-glycero-3-phospho-N-hexadecanoyl-ethanolamine + H2O = 1-O-(1Z-octadecenyl)-sn-glycero-3-phosphate + N-hexadecanoylethanolamine + H(+). With respect to regulation, lysophospholipase D activity is increased by magnesium and manganese and inhibited by calcium in a concentration dependent manner. Loss of lysophospholipase D activity by addition of EDTA. Hydrolyzes lysoglycerophospholipids to produce lysophosphatidic acid (LPA) and the corresponding amines. Shows a preference for 1-O-alkyl-sn-glycero-3-phosphocholine (lyso-PAF), lysophosphatidylethanolamine (lyso-PE) and lysophosphatidylcholine (lyso-PC). May be involved in bioactive N-acylethanolamine biosynthesis from both N-acyl-lysoplasmenylethanolamin (N-acyl-lysoPlsEt) and N-acyl-lysophosphatidylethanolamin (N-acyl-lysoPE). In addition, hydrolyzes glycerophospho-N-acylethanolamine to N-acylethanolamine. Does not display glycerophosphodiester phosphodiesterase activity, since it cannot hydrolyze either glycerophosphoinositol or glycerophosphocholine. This is Lysophospholipase D GDPD1 from Mus musculus (Mouse).